The following is a 285-amino-acid chain: Phosphatidylserine decarboxylase proenzyme (285 aa).

Active-site charge relay system; for autoendoproteolytic cleavage activity residues include Asp89, His146, and Ser252. The Schiff-base intermediate with substrate; via pyruvic acid; for decarboxylase activity role is filled by Ser252. Ser252 is subject to Pyruvic acid (Ser); by autocatalysis.

The protein belongs to the phosphatidylserine decarboxylase family. PSD-B subfamily. Prokaryotic type I sub-subfamily. As to quaternary structure, heterodimer of a large membrane-associated beta subunit and a small pyruvoyl-containing alpha subunit. The cofactor is pyruvate. Is synthesized initially as an inactive proenzyme. Formation of the active enzyme involves a self-maturation process in which the active site pyruvoyl group is generated from an internal serine residue via an autocatalytic post-translational modification. Two non-identical subunits are generated from the proenzyme in this reaction, and the pyruvate is formed at the N-terminus of the alpha chain, which is derived from the carboxyl end of the proenzyme. The autoendoproteolytic cleavage occurs by a canonical serine protease mechanism, in which the side chain hydroxyl group of the serine supplies its oxygen atom to form the C-terminus of the beta chain, while the remainder of the serine residue undergoes an oxidative deamination to produce ammonia and the pyruvoyl prosthetic group on the alpha chain. During this reaction, the Ser that is part of the protease active site of the proenzyme becomes the pyruvoyl prosthetic group, which constitutes an essential element of the active site of the mature decarboxylase.

It localises to the cell membrane. The enzyme catalyses a 1,2-diacyl-sn-glycero-3-phospho-L-serine + H(+) = a 1,2-diacyl-sn-glycero-3-phosphoethanolamine + CO2. The protein operates within phospholipid metabolism; phosphatidylethanolamine biosynthesis; phosphatidylethanolamine from CDP-diacylglycerol: step 2/2. In terms of biological role, catalyzes the formation of phosphatidylethanolamine (PtdEtn) from phosphatidylserine (PtdSer). The protein is Phosphatidylserine decarboxylase proenzyme of Vibrio parahaemolyticus serotype O3:K6 (strain RIMD 2210633).